The following is a 396-amino-acid chain: Elongation factor Tu (396 aa).

Positions Lys10 to Thr206 constitute a tr-type G domain. The segment at Gly19–Thr26 is G1. A GTP-binding site is contributed by Gly19–Thr26. Thr26 is a binding site for Mg(2+). The interval Gly60–Ser64 is G2. The G3 stretch occupies residues Asp81 to Gly84. GTP contacts are provided by residues Asp81–His85 and Asn136–Asp139. Residues Asn136–Asp139 form a G4 region. Residues Ser174 to Arg176 are G5.

It belongs to the TRAFAC class translation factor GTPase superfamily. Classic translation factor GTPase family. EF-Tu/EF-1A subfamily. In terms of assembly, monomer.

The protein localises to the cytoplasm. The catalysed reaction is GTP + H2O = GDP + phosphate + H(+). Functionally, GTP hydrolase that promotes the GTP-dependent binding of aminoacyl-tRNA to the A-site of ribosomes during protein biosynthesis. This Xanthomonas oryzae pv. oryzae (strain MAFF 311018) protein is Elongation factor Tu.